We begin with the raw amino-acid sequence, 320 residues long: Probable serine proteinase inhibitor 1 (320 aa).

It belongs to the serpin family. Poxviruses subfamily.

The polypeptide is Probable serine proteinase inhibitor 1 (SPI-1) (Swinepox virus (strain Kasza) (SWPV)).